The sequence spans 266 residues: Protein PYRICULARIA ORYZAE RESISTANCE 21 (266 aa).

The HMA domain occupies 1–68; the sequence is MGILVILVDL…IWCKAGKIIK (68 aa). 2 residues coordinate a metal cation: Cys-12 and Cys-15. The tract at residues 129 to 156 is disordered; that stretch reads CEKPKPCEKPPPCKPEEPPKPPPEKPPP. Over residues 142-156 the composition is skewed to basic and acidic residues; it reads KPEEPPKPPPEKPPP.

Its function is as follows. Involved in defense responses. Contributes to slowing defense responses toward Magnaporthe oryzae. This is Protein PYRICULARIA ORYZAE RESISTANCE 21 from Oryza sativa subsp. japonica (Rice).